The primary structure comprises 398 residues: Cathepsin D (398 aa).

Positions 1–20 (MAPRGLLVLLLLALVGPCAA) are cleaved as a signal peptide. The propeptide at 21 to 63 (LIRIPLTKFTSTRRMLTEVGSEIPDMNAITQFLKFKLGFADLA) is activation peptide. The Peptidase A1 domain maps to 78–395 (YYGEIGIGTP…DRDNDSVGFA (318 aa)). The active site involves Asp-96. A disulfide bond links Cys-109 and Cys-116. 2 N-linked (GlcNAc...) asparagine glycosylation sites follow: Asn-133 and Asn-251. Cysteines 274 and 278 form a disulfide. Residue Asp-283 is part of the active site. A disulfide bridge connects residues Cys-317 and Cys-354.

The protein belongs to the peptidase A1 family. In terms of assembly, consists of a light chain and a heavy chain. As to expression, oocytic yolk, preovulatory follicles, liver.

Its subcellular location is the lysosome. The catalysed reaction is Specificity similar to, but narrower than, that of pepsin A. Does not cleave the 4-Gln-|-His-5 bond in B chain of insulin.. Its function is as follows. Acid protease active in intracellular protein breakdown. In chicken it is a key enzyme for yolk formation as it is capable of catalyzing intra oocytic break down of protein components of both vitellogenin and VLDL. The sequence is that of Cathepsin D (CTSD) from Gallus gallus (Chicken).